The chain runs to 415 residues: Trehalose synthase (415 aa).

This sequence belongs to the glycosyltransferase group 1 family. Glycosyltransferase 4 subfamily. As to quaternary structure, homodimer. It depends on Mg(2+) as a cofactor.

It catalyses the reaction an NDP-alpha-D-glucose + D-glucose = alpha,alpha-trehalose + a ribonucleoside 5'-diphosphate + H(+). Functionally, synthesizes trehalose from ADP-, UDP- or GDP-glucose and glucose. This is Trehalose synthase from Pyrococcus horikoshii (strain ATCC 700860 / DSM 12428 / JCM 9974 / NBRC 100139 / OT-3).